The sequence spans 51 residues: Insulin (51 aa).

Intrachain disulfides connect cysteine 8-cysteine 37, cysteine 20-cysteine 50, and cysteine 36-cysteine 41.

This sequence belongs to the insulin family. Heterodimer of a B chain and an A chain linked by two disulfide bonds.

The protein resides in the secreted. In terms of biological role, insulin decreases blood glucose concentration. It increases cell permeability to monosaccharides, amino acids and fatty acids. It accelerates glycolysis, the pentose phosphate cycle, and glycogen synthesis in liver. In Gadus morhua subsp. callarias (Baltic cod), this protein is Insulin (ins).